The chain runs to 181 residues: Oligoribonuclease (181 aa).

In terms of domain architecture, Exonuclease spans 8–171 (LIWLDLEMTG…DDIKESIAEL (164 aa)). Residue Y129 is part of the active site.

The protein belongs to the oligoribonuclease family.

It is found in the cytoplasm. Its function is as follows. 3'-to-5' exoribonuclease specific for small oligoribonucleotides. The polypeptide is Oligoribonuclease (Colwellia psychrerythraea (strain 34H / ATCC BAA-681) (Vibrio psychroerythus)).